An 880-amino-acid polypeptide reads, in one-letter code: Probable dipeptidyl-aminopeptidase B (880 aa).

Over residues 1–26 (MPRQRAPKEEEAELLTKQERSARSSE) the composition is skewed to basic and acidic residues. Residues 1 to 71 (MPRQRAPKEE…KYTDEDDEAQ (71 aa)) form a disordered region. The Cytoplasmic portion of the chain corresponds to 1-93 (MPRQRAPKEE…PISVDKKTRR (93 aa)). A compositionally biased stretch (low complexity) spans 30–40 (DTSISSISTTS). A helical; Signal-anchor for type II membrane protein transmembrane segment spans residues 94 to 114 (WLWIVGIACVTGWALALVFFL). The Vacuolar portion of the chain corresponds to 115 to 880 (MSGSYKHVST…AQVDARMERR (766 aa)). N533 is a glycosylation site (N-linked (GlcNAc...) asparagine). The active-site Charge relay system is S724. Residue N778 is glycosylated (N-linked (GlcNAc...) asparagine). Catalysis depends on charge relay system residues D801 and H834.

Belongs to the peptidase S9B family.

It localises to the vacuole membrane. The enzyme catalyses Release of an N-terminal dipeptide, Xaa-Yaa-|-Zaa-, from a polypeptide, preferentially when Yaa is Pro, provided Zaa is neither Pro nor hydroxyproline.. Functionally, type IV dipeptidyl-peptidase which removes N-terminal dipeptides sequentially from polypeptides having unsubstituted N-termini provided that the penultimate residue is proline. This is Probable dipeptidyl-aminopeptidase B (dapB) from Pyrenophora tritici-repentis (strain Pt-1C-BFP) (Wheat tan spot fungus).